The sequence spans 81 residues: Photosystem I iron-sulfur center (81 aa).

4Fe-4S ferredoxin-type domains follow at residues 2-31 (SHSV…MVPW) and 39-68 (IASS…IRVY). [4Fe-4S] cluster-binding residues include Cys-11, Cys-14, Cys-17, Cys-21, Cys-48, Cys-51, Cys-54, and Cys-58.

The cyanobacterial PSI reaction center is composed of one copy each of PsaA,B,C,D,E,F,I,J,K,L,M and X, and forms trimeric complexes. [4Fe-4S] cluster serves as cofactor.

Its subcellular location is the cellular thylakoid membrane. The enzyme catalyses reduced [plastocyanin] + hnu + oxidized [2Fe-2S]-[ferredoxin] = oxidized [plastocyanin] + reduced [2Fe-2S]-[ferredoxin]. Its function is as follows. Apoprotein for the two 4Fe-4S centers FA and FB of photosystem I (PSI); essential for photochemical activity. FB is the terminal electron acceptor of PSI, donating electrons to ferredoxin. The C-terminus interacts with PsaA/B/D and helps assemble the protein into the PSI complex. Required for binding of PsaD and PsaE to PSI. PSI is a plastocyanin/cytochrome c6-ferredoxin oxidoreductase, converting photonic excitation into a charge separation, which transfers an electron from the donor P700 chlorophyll pair to the spectroscopically characterized acceptors A0, A1, FX, FA and FB in turn. Functionally, mutant proteins with a 3Fe-4S center are unable to reconstitute PSI activity in vivo. This Synechocystis sp. (strain ATCC 27184 / PCC 6803 / Kazusa) protein is Photosystem I iron-sulfur center.